Here is a 297-residue protein sequence, read N- to C-terminus: CASP-like protein 4A2 (297 aa).

Residues 1–20 (MKMKRTASSNSEAQSYNESP) are compositionally biased toward polar residues. The tract at residues 1–135 (MKMKRTASSN…PINGEESTRT (135 aa)) is disordered. Over 1–149 (MKMKRTASSN…ARGDDLVSLT (149 aa)) the chain is Cytoplasmic. A compositionally biased stretch (pro residues) spans 69–83 (LPSPIPPPPPQFPPP). The chain crosses the membrane as a helical span at residues 150–170 (ALGFRITEVILCVISFSIMAA). At 171–191 (DKTQGWSGDSYDRYKEYRYCL) the chain is on the extracellular side. The chain crosses the membrane as a helical span at residues 192 to 212 (AVNVIAFVYSAFEACDAACYI). Residues 213-225 (AKESYMINCGFHD) are Cytoplasmic-facing. The helical transmembrane segment at 226 to 246 (LFVFSMDQLLAYLLMSASSCA) threads the bilayer. The Extracellular segment spans residues 247 to 265 (ATRVDDWVSNWGKDEFTQM). The helical transmembrane segment at 266–286 (ATASIAVSFLAFGAFAVSALI) threads the bilayer. At 287–297 (SSYRLFTHASS) the chain is on the cytoplasmic side.

It belongs to the Casparian strip membrane proteins (CASP) family. In terms of assembly, homodimer and heterodimers.

It localises to the cell membrane. The protein is CASP-like protein 4A2 of Arabidopsis thaliana (Mouse-ear cress).